A 487-amino-acid polypeptide reads, in one-letter code: N-succinylglutamate 5-semialdehyde dehydrogenase (487 aa).

The interval 1–23 (MTHFIKGQWHTGKGHDVASSNPA) is disordered. 220–225 (GSSRTG) is an NAD(+) binding site. Residues Glu-243 and Cys-277 contribute to the active site.

Belongs to the aldehyde dehydrogenase family. AstD subfamily.

The enzyme catalyses N-succinyl-L-glutamate 5-semialdehyde + NAD(+) + H2O = N-succinyl-L-glutamate + NADH + 2 H(+). It functions in the pathway amino-acid degradation; L-arginine degradation via AST pathway; L-glutamate and succinate from L-arginine: step 4/5. Functionally, catalyzes the NAD-dependent reduction of succinylglutamate semialdehyde into succinylglutamate. The chain is N-succinylglutamate 5-semialdehyde dehydrogenase from Shewanella oneidensis (strain ATCC 700550 / JCM 31522 / CIP 106686 / LMG 19005 / NCIMB 14063 / MR-1).